Here is a 294-residue protein sequence, read N- to C-terminus: 4-hydroxy-tetrahydrodipicolinate synthase (294 aa).

Thr-45 provides a ligand contact to pyruvate. Tyr-133 acts as the Proton donor/acceptor in catalysis. The Schiff-base intermediate with substrate role is filled by Lys-162. Pyruvate is bound at residue Ile-204.

Belongs to the DapA family. As to quaternary structure, homotetramer; dimer of dimers.

The protein resides in the cytoplasm. It catalyses the reaction L-aspartate 4-semialdehyde + pyruvate = (2S,4S)-4-hydroxy-2,3,4,5-tetrahydrodipicolinate + H2O + H(+). Its pathway is amino-acid biosynthesis; L-lysine biosynthesis via DAP pathway; (S)-tetrahydrodipicolinate from L-aspartate: step 3/4. Is allosterically regulated by the feedback inhibitor (S)-lysine. In terms of biological role, catalyzes the condensation of (S)-aspartate-beta-semialdehyde [(S)-ASA] and pyruvate to 4-hydroxy-tetrahydrodipicolinate (HTPA). The protein is 4-hydroxy-tetrahydrodipicolinate synthase of Agrobacterium fabrum (strain C58 / ATCC 33970) (Agrobacterium tumefaciens (strain C58)).